The primary structure comprises 396 residues: Succinyl-diaminopimelate desuccinylase (396 aa).

His74 lines the Zn(2+) pocket. Asp76 is a catalytic residue. Asp107 is a Zn(2+) binding site. Glu142 acts as the Proton acceptor in catalysis. Residues Glu143, Glu171, and His360 each coordinate Zn(2+).

Belongs to the peptidase M20A family. DapE subfamily. In terms of assembly, homodimer. The cofactor is Zn(2+). Co(2+) serves as cofactor.

The enzyme catalyses N-succinyl-(2S,6S)-2,6-diaminopimelate + H2O = (2S,6S)-2,6-diaminopimelate + succinate. The protein operates within amino-acid biosynthesis; L-lysine biosynthesis via DAP pathway; LL-2,6-diaminopimelate from (S)-tetrahydrodipicolinate (succinylase route): step 3/3. In terms of biological role, catalyzes the hydrolysis of N-succinyl-L,L-diaminopimelic acid (SDAP), forming succinate and LL-2,6-diaminopimelate (DAP), an intermediate involved in the bacterial biosynthesis of lysine and meso-diaminopimelic acid, an essential component of bacterial cell walls. This chain is Succinyl-diaminopimelate desuccinylase, found in Methylobacterium sp. (strain 4-46).